The following is a 353-amino-acid chain: 2-Hydroxyacid oxidase 2 (353 aa).

The FMN hydroxy acid dehydrogenase domain occupies 2–353 (PLVCLTDFRE…NQDLIQFSRL (352 aa)). Residues 77–79 (PTG), Ser106, and Gln128 contribute to the FMN site. Tyr130 serves as a coordination point for a 2-oxocarboxylate. Residue Thr156 participates in FMN binding. An a 2-oxocarboxylate-binding site is contributed by Arg165. Lys224 is an FMN binding site. His248 functions as the Proton acceptor in the catalytic mechanism. An a 2-oxocarboxylate-binding site is contributed by Arg251. FMN-binding positions include 279-283 (DGGIR) and 302-303 (GR). Residues 351-353 (SRL) carry the Microbody targeting signal motif.

It belongs to the FMN-dependent alpha-hydroxy acid dehydrogenase family. In terms of assembly, homotetramer. FMN serves as cofactor.

Its subcellular location is the peroxisome. It catalyses the reaction a (2S)-2-hydroxycarboxylate + O2 = a 2-oxocarboxylate + H2O2. It carries out the reaction 2-hydroxyhexadecanoate + O2 = 2-oxohexadecanoate + H2O2. The catalysed reaction is 2-hydroxyoctanoate + O2 = 2-oxooctanoate + H2O2. Its pathway is lipid metabolism; fatty acid metabolism. Oxidase that catalyzes the oxidation of medium and long chain hydroxyacids such as 2-hydroxyhexadecanoate and 2-hydroxyoctanoate, to the correspondong 2-oxoacids. Its role in the oxidation of 2-hydroxy fatty acids may contribute to the general pathway of fatty acid alpha-oxidation. Active in vitro with the artificial electron acceptor 2,6-dichlorophenolindophenol (DCIP), but O2 is believed to be the physiological electron acceptor, leading to the production of H2O2. This Bos taurus (Bovine) protein is 2-Hydroxyacid oxidase 2 (HAO2).